Consider the following 320-residue polypeptide: Ferrochelatase (320 aa).

Residues histidine 194 and glutamate 275 each contribute to the Fe cation site.

It belongs to the ferrochelatase family.

Its subcellular location is the cytoplasm. The catalysed reaction is heme b + 2 H(+) = protoporphyrin IX + Fe(2+). It participates in porphyrin-containing compound metabolism; protoheme biosynthesis; protoheme from protoporphyrin-IX: step 1/1. Functionally, catalyzes the ferrous insertion into protoporphyrin IX. The chain is Ferrochelatase from Pectobacterium atrosepticum (strain SCRI 1043 / ATCC BAA-672) (Erwinia carotovora subsp. atroseptica).